Consider the following 60-residue polypeptide: U-scutigerotoxin(02)-Tl4a (60 aa).

The protein belongs to the scutigerotoxin-02 family. In terms of processing, contains 3 disulfide bonds. As to expression, expressed by the venom gland.

Its subcellular location is the secreted. The protein is U-scutigerotoxin(02)-Tl4a of Thereuopoda longicornis (Long-legged centipede).